The following is a 110-amino-acid chain: MRLEELKRLQNPLEQVDDGKYLLENHQLAMDVENNIENYPLSLQPLESKVKIIQRAWREYLQRQDPLEKRSPSPPSVSSDKLSSSVSMNTFSDSSTPVSVSRPLAWTVLH.

Residues 47–67 (ESKVKIIQRAWREYLQRQDPL) enclose the IQ domain. Residues 63–99 (RQDPLEKRSPSPPSVSSDKLSSSVSMNTFSDSSTPVS) form a disordered region. Residues 76–87 (SVSSDKLSSSVS) are compositionally biased toward low complexity. Over residues 88-99 (MNTFSDSSTPVS) the composition is skewed to polar residues.

The protein is IQ domain-containing protein J of Mus musculus (Mouse).